Consider the following 123-residue polypeptide: S-adenosylmethionine decarboxylase proenzyme 2 (123 aa).

Ser65 acts as the Schiff-base intermediate with substrate; via pyruvic acid in catalysis. Ser65 is subject to Pyruvic acid (Ser); by autocatalysis. His70 functions as the Proton acceptor; for processing activity in the catalytic mechanism. The active-site Proton donor; for catalytic activity is the Cys85.

The protein belongs to the prokaryotic AdoMetDC family. Type 1 subfamily. In terms of assembly, heterotetramer of two alpha and two beta chains arranged as a dimer of alpha/beta heterodimers. Pyruvate is required as a cofactor. Is synthesized initially as an inactive proenzyme. Formation of the active enzyme involves a self-maturation process in which the active site pyruvoyl group is generated from an internal serine residue via an autocatalytic post-translational modification. Two non-identical subunits are generated from the proenzyme in this reaction, and the pyruvate is formed at the N-terminus of the alpha chain, which is derived from the carboxyl end of the proenzyme. The post-translation cleavage follows an unusual pathway, termed non-hydrolytic serinolysis, in which the side chain hydroxyl group of the serine supplies its oxygen atom to form the C-terminus of the beta chain, while the remainder of the serine residue undergoes an oxidative deamination to produce ammonia and the pyruvoyl group blocking the N-terminus of the alpha chain.

The enzyme catalyses S-adenosyl-L-methionine + H(+) = S-adenosyl 3-(methylsulfanyl)propylamine + CO2. It functions in the pathway amine and polyamine biosynthesis; S-adenosylmethioninamine biosynthesis; S-adenosylmethioninamine from S-adenosyl-L-methionine: step 1/1. In terms of biological role, catalyzes the decarboxylation of S-adenosylmethionine to S-adenosylmethioninamine (dcAdoMet), the propylamine donor required for the synthesis of the polyamines spermine and spermidine from the diamine putrescine. This is S-adenosylmethionine decarboxylase proenzyme 2 from Bacillus anthracis.